We begin with the raw amino-acid sequence, 403 residues long: SH3 and cysteine-rich domain-containing protein (403 aa).

The disordered stretch occupies residues 1–43 (MIPPSGAREDGVDGLPKETASAEQPPSPASTGSQESKLQKLKR). Over residues 21–36 (SAEQPPSPASTGSQES) the composition is skewed to polar residues. Residues 108 to 160 (AHAFQEHIFKKPTFCDVCNHMIVGTNAKHGLRCKACKMSIHHKCMDGLAPQRC) form a Phorbol-ester/DAG-type zinc finger. The disordered stretch occupies residues 212–253 (QRTKKSSSGSGSDSPHRTSTSDLVEVPEEADGPGDGYDLRKR). SH3 domains follow at residues 286 to 345 (LQMN…RVHQ) and 348 to 403 (KIFR…LENI).

In terms of assembly, interacts (via SH3 domains) with CACNA1S. Interacts with CACNA1H. Interacts with CACNA1C.

The protein resides in the cytoplasm. It is found in the cytosol. It localises to the cell membrane. The protein localises to the sarcolemma. Its function is as follows. Promotes expression of the ion channel CACNA1H at the cell membrane, and thereby contributes to the regulation of channel activity. Plays a minor and redundant role in promoting the expression of calcium channel CACNA1S at the cell membrane, and thereby contributes to increased channel activity. Slows down the inactivation rate of the calcium channel CACNA1C. The protein is SH3 and cysteine-rich domain-containing protein (STAC) of Bos taurus (Bovine).